The sequence spans 277 residues: Sulfur carrier protein FdhD (277 aa).

The Cysteine persulfide intermediate role is filled by C121. 260-265 (FCKPGR) provides a ligand contact to Mo-bis(molybdopterin guanine dinucleotide).

It belongs to the FdhD family.

It localises to the cytoplasm. In terms of biological role, required for formate dehydrogenase (FDH) activity. Acts as a sulfur carrier protein that transfers sulfur from IscS to the molybdenum cofactor prior to its insertion into FDH. This is Sulfur carrier protein FdhD from Escherichia coli O8 (strain IAI1).